The primary structure comprises 224 residues: MAPGSVLSLAVALATIIGISCTATVDETMRWKECLNTNQSIFDFQIETLQGEYTDLSQYRGKVILLVNVATFCAYTQQYTDFNPMLEKYQAQGLTLVAFPCNQFYLQEPAENHELMNGLTYVRPGNGWTPHQELHIYGKIDVNGDNHHPLYEFVKESCPQTVDKIGKTDELMYNPVRPSDITWNFEKFLIDRNGQPRFRFHPTAWSHGDVVTPFIEQLLAEPAN.

A signal peptide spans 1 to 18; the sequence is MAPGSVLSLAVALATIIG. A glycan (N-linked (GlcNAc...) asparagine) is linked at asparagine 38. Cysteine 73 is an active-site residue.

The protein belongs to the glutathione peroxidase family.

Its subcellular location is the secreted. It is found in the extracellular space. It carries out the reaction 2 glutathione + H2O2 = glutathione disulfide + 2 H2O. In Caenorhabditis elegans, this protein is Glutathione peroxidase 3 (gpx-3).